The chain runs to 128 residues: MKTVLLFLVALAAAAGPAQALRCHVCTSSSNCKKPQVCSASSSFCKTVIRVEPLSGNLVEKNCSVWCTPTNNQQGQVSKGQETTLCCNSDLCNEALQSWQSAAPARTSAHLGLALACGLLALLWAPGL.

Positions methionine 1–alanine 20 are cleaved as a signal peptide. One can recognise a UPAR/Ly6 domain in the interval leucine 21–serine 108. 5 cysteine pairs are disulfide-bonded: cysteine 23–cysteine 45, cysteine 26–cysteine 32, cysteine 38–cysteine 63, cysteine 67–cysteine 86, and cysteine 87–cysteine 92. A lipid anchor (GPI-anchor amidated serine) is attached at serine 98. A propeptide spans tryptophan 99–leucine 128 (removed in mature form).

It localises to the cell membrane. In terms of biological role, may act as a specification marker at earliest stage specification of lymphocytes between B- and T-cell development. Marks the earliest stage of B-cell specification. In Bos taurus (Bovine), this protein is Lymphocyte antigen 6D (LY6D).